A 158-amino-acid polypeptide reads, in one-letter code: MAAQGVGPGPGSAAPPGLEAARQKLALRRKKVLSTEEMELYELAQAAGGAIDPDVFKILVDLLKLNVAPLAVFQMLKSMCAGQRLASEPQDPAAVSLPTSSVPETRGRNKGSAALGGALALAERSSREGSSQRMPRQPSATRLPKGGGPGKSPTRGST.

The residue at position 34 (S34) is a Phosphoserine. The interval 84 to 158 (RLASEPQDPA…PGKSPTRGST (75 aa)) is disordered. Positions 111-122 (GSAALGGALALA) are enriched in low complexity. The span at 128–140 (EGSSQRMPRQPSA) shows a compositional bias: polar residues. The residue at position 152 (S152) is a Phosphoserine.

Belongs to the MOZART2 family. In terms of assembly, associates with the gamma-tubulin ring complex (gTuRC) consisting of TUBGCP2, TUBGCP3, TUBGCP4, TUBGCP5 and TUBGCP6 and gamma-tubulin TUBG1 or TUBG2; within the complex, interacts with TUBGCP2; the interaction plays a role in gTuRC activation. Interacts with TUBG1.

The protein resides in the cytoplasm. It is found in the cytoskeleton. It localises to the microtubule organizing center. The protein localises to the centrosome. Its subcellular location is the spindle. Its function is as follows. Required for the recruitment and the assembly of the gamma-tubulin ring complex (gTuRC) at the centrosome. The gTuRC regulates the minus-end nucleation of alpha-beta tubulin heterodimers that grow into microtubule protafilaments, a critical step in centrosome duplication and spindle formation. The polypeptide is Mitotic-spindle organizing protein 2B (MZT2B) (Homo sapiens (Human)).